The primary structure comprises 271 residues: Ribosomal RNA small subunit methyltransferase A (271 aa).

Positions 22, 24, 49, 70, 96, and 116 each coordinate S-adenosyl-L-methionine.

Belongs to the class I-like SAM-binding methyltransferase superfamily. rRNA adenine N(6)-methyltransferase family. RsmA subfamily.

It localises to the cytoplasm. It catalyses the reaction adenosine(1518)/adenosine(1519) in 16S rRNA + 4 S-adenosyl-L-methionine = N(6)-dimethyladenosine(1518)/N(6)-dimethyladenosine(1519) in 16S rRNA + 4 S-adenosyl-L-homocysteine + 4 H(+). Specifically dimethylates two adjacent adenosines (A1518 and A1519) in the loop of a conserved hairpin near the 3'-end of 16S rRNA in the 30S particle. May play a critical role in biogenesis of 30S subunits. The sequence is that of Ribosomal RNA small subunit methyltransferase A from Sphingopyxis alaskensis (strain DSM 13593 / LMG 18877 / RB2256) (Sphingomonas alaskensis).